Consider the following 258-residue polypeptide: Small ribosomal subunit protein mS40 (258 aa).

A mitochondrion-targeting transit peptide spans 1–35 (MAASVLNVLLRRLPYFSPFRGAYGVQVPLQTLCTK). Ser-49 carries the post-translational modification Phosphoserine. The disordered stretch occupies residues 221 to 258 (QGHLREESGPPPESMPKVPLTAPNEATSTEQAGPQSAL). Positions 244–258 (NEATSTEQAGPQSAL) are enriched in polar residues.

The protein belongs to the bacterial ribosomal protein bS18 family. Mitochondrion-specific ribosomal protein mS40 subfamily. In terms of assembly, component of the mitochondrial ribosome small subunit (28S) which comprises a 12S rRNA and about 30 distinct proteins.

It is found in the mitochondrion. The protein is Small ribosomal subunit protein mS40 of Bos taurus (Bovine).